Consider the following 399-residue polypeptide: Zinc finger TRAF-type-containing protein 1 (399 aa).

Positions 1-13 (MSGAEEAGGGGPA) are enriched in gly residues. Residues 1–20 (MSGAEEAGGGGPAAGPAGAV) are disordered. Residues 106–151 (CTVCLDLPKASVYQCTNGHLMCAGCFIHLLADARLKEEQATCPNCR) form an RING-type; degenerate zinc finger. The TRAF-type zinc finger occupies 152 to 210 (CEISKSLCCRNLAVEKAVSELPSECGFCLRQFPRSLLERHQKEECQDRVTQCKYKRIGC).

Belongs to the ZFTRAF1 family. In terms of assembly, interacts with LGALS3.

The protein localises to the cytoplasm. The protein resides in the perinuclear region. This Rattus norvegicus (Rat) protein is Zinc finger TRAF-type-containing protein 1.